The primary structure comprises 167 residues: MELKHLPKYKHITEHAETYANIDAGSLELFLSLFDISKKMNHVMEHYFAGRGLSEGKFKILMLLFDAKDHRLSPTELAKRSNVTKATITGLLDGLARDGFVSRRHHTEDKRKISIELTTEGKARLEQFLPGHFSKISAVMENYSDEEKDMFVKMLGDLFERLSVFKD.

The HTH marR-type domain maps to 26 to 160 (SLELFLSLFD…FVKMLGDLFE (135 aa)). Positions 74 to 97 (PTELAKRSNVTKATITGLLDGLAR) form a DNA-binding region, H-T-H motif.

In terms of assembly, homodimer. The N- and C-terminal helices from both subunits stabilize YetL dimer via extensive intersubunit interactions.

Its activity is regulated as follows. Binding to the yetM cis sequence is clearly inhibited by kaempferol, morin, apigenin and luteolin, slightly inhibited by quercetin and galangin, but no inhibition is observed with the other flavonoids. Flavonoid binding may induce conformational changes and modulate interaction with DNA. Its function is as follows. Negatively regulates yetM expression and its own expression. Binds specifically to corresponding single sites in the divergent yetL and yetM promoter regions, with higher affinity to the yetM region. Recognizes a 28-mer operator of double-stranded DNA that contains a palindromic sequence. In Bacillus subtilis (strain 168), this protein is HTH-type transcriptional repressor YetL (yetL).